The following is a 549-amino-acid chain: Teichoic acids export ATP-binding protein TagH (549 aa).

In terms of domain architecture, ABC transporter spans 22–243 (DKLKDLFRKQ…YRAFLKEYNQ (222 aa)). Position 57–64 (57–64 (GLNGSGKS)) interacts with ATP. A unknown region spans residues 244–549 (MSMEDRKKFQ…EIQSISIVKK (306 aa)). Residues 346-415 (ENMYMVKSNG…VSTKFIEPFK (70 aa)) enclose the SH3b domain.

It belongs to the ABC transporter superfamily. Teichoic acids exporter (TC 3.A.1.104.1) family. In terms of assembly, the complex is composed of two ATP-binding proteins (TagH) and two transmembrane proteins (TagG).

Its subcellular location is the cell membrane. The catalysed reaction is ATP + H2O + teichoic acidSide 1 = ADP + phosphate + teichoic acidSide 2.. Functionally, part of the ABC transporter complex TagGH involved in teichoic acids export. Responsible for energy coupling to the transport system. The chain is Teichoic acids export ATP-binding protein TagH from Bacillus cereus (strain ZK / E33L).